The primary structure comprises 299 residues: Protein LacX, chromosomal (299 aa).

This Lactococcus lactis subsp. lactis (Streptococcus lactis) protein is Protein LacX, chromosomal (lacX).